Consider the following 460-residue polypeptide: Glutamate--tRNA ligase 2 (460 aa).

The short motif at 8–18 (PSPTGFLHVGG) is the 'HIGH' region element. The 'KMSKS' region signature appears at 237-241 (KLSKR). Position 240 (K240) interacts with ATP.

This sequence belongs to the class-I aminoacyl-tRNA synthetase family. Glutamate--tRNA ligase type 1 subfamily. In terms of assembly, monomer.

The protein resides in the cytoplasm. It catalyses the reaction tRNA(Glu) + L-glutamate + ATP = L-glutamyl-tRNA(Glu) + AMP + diphosphate. Functionally, catalyzes the attachment of glutamate to tRNA(Glu) in a two-step reaction: glutamate is first activated by ATP to form Glu-AMP and then transferred to the acceptor end of tRNA(Glu). This is Glutamate--tRNA ligase 2 from Campylobacter fetus subsp. fetus (strain 82-40).